The following is a 624-amino-acid chain: Mannosyl-oligosaccharide 1,2-alpha-mannosidase MNS3 (624 aa).

Over 1-43 the chain is Cytoplasmic; sequence MSKSLPYSVKDIHYDNAKFRHRSPLKVFSQSLLTLSTKRNYAS. The helical; Signal-anchor for type II membrane protein transmembrane segment at 44–64 threads the bilayer; sequence CSTGKFLILILFFGVACLMLM. The Lumenal segment spans residues 65 to 624; the sequence is SKSPNESGLN…AHPLPIRRNT (560 aa). Asn69 and Asn114 each carry an N-linked (GlcNAc...) asparagine glycan. The tract at residues 91–123 is disordered; that stretch reads LRKPPRLPPRLSPDEGQLRGSSTNGSTISNSDP. Positions 110 to 121 are enriched in low complexity; that stretch reads GSSTNGSTISNS. Glu212 acts as the Proton donor in catalysis. Asn236 is a glycosylation site (N-linked (GlcNAc...) asparagine). The active site involves Asp357. N-linked (GlcNAc...) asparagine glycosylation occurs at Asn377. Cys428 and Cys471 form a disulfide bridge. Residue Glu485 is the Proton donor of the active site. Asn503 is a glycosylation site (N-linked (GlcNAc...) asparagine). Glu526 is a catalytic residue. Thr613 provides a ligand contact to Ca(2+).

The protein belongs to the glycosyl hydrolase 47 family. The cofactor is Ca(2+). Mn(2+) serves as cofactor. Requires Mg(2+) as cofactor. Expressed in flowers, siliques, stems, leaves, roots, stamens and sepals.

The protein resides in the golgi apparatus. Its subcellular location is the cis-Golgi network membrane. It catalyses the reaction N(4)-(alpha-D-Man-(1-&gt;2)-alpha-D-Man-(1-&gt;2)-alpha-D-Man-(1-&gt;3)-[alpha-D-Man-(1-&gt;2)-alpha-D-Man-(1-&gt;3)-[alpha-D-Man-(1-&gt;2)-alpha-D-Man-(1-&gt;6)]-alpha-D-Man-(1-&gt;6)]-beta-D-Man-(1-&gt;4)-beta-D-GlcNAc-(1-&gt;4)-beta-D-GlcNAc)-L-asparaginyl-[protein] (N-glucan mannose isomer 9A1,2,3B1,2,3) + 4 H2O = N(4)-(alpha-D-Man-(1-&gt;3)-[alpha-D-Man-(1-&gt;3)-[alpha-D-Man-(1-&gt;6)]-alpha-D-Man-(1-&gt;6)]-beta-D-Man-(1-&gt;4)-beta-D-GlcNAc-(1-&gt;4)-beta-D-GlcNAc)-L-asparaginyl-[protein] (N-glucan mannose isomer 5A1,2) + 4 beta-D-mannose. The enzyme catalyses N(4)-(alpha-D-Man-(1-&gt;2)-alpha-D-Man-(1-&gt;2)-alpha-D-Man-(1-&gt;3)-[alpha-D-Man-(1-&gt;3)-[alpha-D-Man-(1-&gt;2)-alpha-D-Man-(1-&gt;6)]-alpha-D-Man-(1-&gt;6)]-beta-D-Man-(1-&gt;4)-beta-D-GlcNAc-(1-&gt;4)-beta-D-GlcNAc)-L-asparaginyl-[protein] (N-glucan mannose isomer 8A1,2,3B1,3) + 3 H2O = N(4)-(alpha-D-Man-(1-&gt;3)-[alpha-D-Man-(1-&gt;3)-[alpha-D-Man-(1-&gt;6)]-alpha-D-Man-(1-&gt;6)]-beta-D-Man-(1-&gt;4)-beta-D-GlcNAc-(1-&gt;4)-beta-D-GlcNAc)-L-asparaginyl-[protein] (N-glucan mannose isomer 5A1,2) + 3 beta-D-mannose. It carries out the reaction N(4)-(alpha-D-Man-(1-&gt;2)-alpha-D-Man-(1-&gt;2)-alpha-D-Man-(1-&gt;3)-[alpha-D-Man-(1-&gt;2)-alpha-D-Man-(1-&gt;3)-[alpha-D-Man-(1-&gt;2)-alpha-D-Man-(1-&gt;6)]-alpha-D-Man-(1-&gt;6)]-beta-D-Man-(1-&gt;4)-beta-D-GlcNAc-(1-&gt;4)-beta-D-GlcNAc)-L-asparaginyl-[protein] (N-glucan mannose isomer 9A1,2,3B1,2,3) + H2O = N(4)-(alpha-D-Man-(1-&gt;2)-alpha-D-Man-(1-&gt;2)-alpha-D-Man-(1-&gt;3)-[alpha-D-Man-(1-&gt;3)-[alpha-D-Man-(1-&gt;2)-alpha-D-Man-(1-&gt;6)]-alpha-D-Man-(1-&gt;6)]-beta-D-Man-(1-&gt;4)-beta-D-GlcNAc-(1-&gt;4)-beta-D-GlcNAc)-L-asparaginyl-[protein] (N-glucan mannose isomer 8A1,2,3B1,3) + beta-D-mannose. It functions in the pathway protein modification; protein glycosylation. With respect to regulation, inhibited by kifunensine and 1-deoxymannojirimycin, but not by swainsonine. Its function is as follows. Class I alpha-mannosidase essential for early N-glycan processing. Removes preferentially alpha-1,2-linked mannose residues from Man(9)GlcNAc(2) to produce Man(8)GlcNAc(2). Involved in root development and cell wall biosynthesis. This chain is Mannosyl-oligosaccharide 1,2-alpha-mannosidase MNS3 (MNS3), found in Arabidopsis thaliana (Mouse-ear cress).